Here is a 216-residue protein sequence, read N- to C-terminus: Maleylacetoacetate isomerase (216 aa).

M1 is modified (N-acetylmethionine). One can recognise a GST N-terminal domain in the interval G4–R87. Glutathione-binding positions include S14–R19 and Q45. At K57 the chain carries N6-succinyllysine. Glutathione contacts are provided by residues V59, Q71–S72, Q111, and N115–S117. A GST C-terminal domain is found at D92–A212. Phosphothreonine is present on T136. S137 bears the Phosphoserine mark. An N6-succinyllysine modification is found at K177. S181 is modified (phosphoserine).

This sequence belongs to the GST superfamily. Zeta family. As to quaternary structure, homodimer. Glutathione serves as cofactor. Post-translationally, the N-terminus is blocked.

The protein localises to the cytoplasm. It carries out the reaction 4-maleylacetoacetate = 4-fumarylacetoacetate. The enzyme catalyses RX + glutathione = an S-substituted glutathione + a halide anion + H(+). Its pathway is amino-acid degradation; L-phenylalanine degradation; acetoacetate and fumarate from L-phenylalanine: step 5/6. In terms of biological role, probable bifunctional enzyme showing minimal glutathione-conjugating activity with ethacrynic acid and 7-chloro-4-nitrobenz-2-oxa-1, 3-diazole and maleylacetoacetate isomerase activity. Also has low glutathione peroxidase activity with t-butyl and cumene hydroperoxides. Is able to catalyze the glutathione dependent oxygenation of dichloroacetic acid to glyoxylic acid. This chain is Maleylacetoacetate isomerase (Gstz1), found in Rattus norvegicus (Rat).